A 151-amino-acid chain; its full sequence is 3-dehydroquinate dehydratase (151 aa).

Catalysis depends on tyrosine 24, which acts as the Proton acceptor. The substrate site is built by asparagine 76, histidine 82, and aspartate 89. The Proton donor role is filled by histidine 102. Substrate contacts are provided by residues 103 to 104 (LS) and arginine 113.

Belongs to the type-II 3-dehydroquinase family. In terms of assembly, homododecamer.

It carries out the reaction 3-dehydroquinate = 3-dehydroshikimate + H2O. It functions in the pathway metabolic intermediate biosynthesis; chorismate biosynthesis; chorismate from D-erythrose 4-phosphate and phosphoenolpyruvate: step 3/7. Functionally, catalyzes a trans-dehydration via an enolate intermediate. This is 3-dehydroquinate dehydratase from Acinetobacter baumannii (strain ATCC 17978 / DSM 105126 / CIP 53.77 / LMG 1025 / NCDC KC755 / 5377).